The primary structure comprises 286 residues: ATP synthase gamma chain (286 aa).

It belongs to the ATPase gamma chain family. In terms of assembly, F-type ATPases have 2 components, CF(1) - the catalytic core - and CF(0) - the membrane proton channel. CF(1) has five subunits: alpha(3), beta(3), gamma(1), delta(1), epsilon(1). CF(0) has three main subunits: a, b and c.

Its subcellular location is the cell inner membrane. Functionally, produces ATP from ADP in the presence of a proton gradient across the membrane. The gamma chain is believed to be important in regulating ATPase activity and the flow of protons through the CF(0) complex. In Christiangramia forsetii (strain DSM 17595 / CGMCC 1.15422 / KT0803) (Gramella forsetii), this protein is ATP synthase gamma chain.